We begin with the raw amino-acid sequence, 254 residues long: Major prion protein (254 aa).

An N-terminal signal peptide occupies residues 1 to 22 (MANLGYWLLALFVATWTDVGLC). An interaction with GRB2, ERI3 and SYN1 region spans residues 23 to 231 (KKRPKPGGWN…SQAYYDGRRS (209 aa)). The tract at residues 25 to 107 (RPKPGGWNTG…QWNKPSKPKT (83 aa)) is disordered. 5 repeat units span residues 51 to 59 (PQGGGTWGQ), 60 to 67 (PHGGGWGQ), 68 to 75 (PHGGGWGQ), 76 to 83 (PHGGGWGQ), and 84 to 91 (PHGGGWGQ). A 5 X 8 AA tandem repeats of P-H-G-G-G-W-G-Q region spans residues 51–91 (PQGGGTWGQPHGGGWGQPHGGGWGQPHGGGWGQPHGGGWGQ). Over residues 52-95 (QGGGTWGQPHGGGWGQPHGGGWGQPHGGGWGQPHGGGWGQGGGT) the composition is skewed to gly residues. Cu(2+) contacts are provided by H61, G62, G63, H69, G70, G71, H77, G78, G79, H85, G86, and G87. A disulfide bridge links C179 with C214. N181 and N197 each carry an N-linked (GlcNAc...) asparagine glycan. Residue S231 is the site of GPI-anchor amidated serine attachment. The propeptide at 232–254 (SAVLFSSPPMILLISFLIFLIVG) is removed in mature form.

Belongs to the prion family. Monomer and homodimer. Has a tendency to aggregate into amyloid fibrils containing a cross-beta spine, formed by a steric zipper of superposed beta-strands. Soluble oligomers may represent an intermediate stage on the path to fibril formation. Copper binding may promote oligomerization. Interacts with GRB2, APP, ERI3/PRNPIP and SYN1. Mislocalized cytosolically exposed PrP interacts with MGRN1; this interaction alters MGRN1 subcellular location and causes lysosomal enlargement. Interacts with KIAA1191.

It is found in the cell membrane. The protein localises to the golgi apparatus. Its function is as follows. Its primary physiological function is unclear. Has cytoprotective activity against internal or environmental stresses. May play a role in neuronal development and synaptic plasticity. May be required for neuronal myelin sheath maintenance. May play a role in iron uptake and iron homeostasis. Soluble oligomers are toxic to cultured neuroblastoma cells and induce apoptosis (in vitro). Association with GPC1 (via its heparan sulfate chains) targets PRNP to lipid rafts. Also provides Cu(2+) or Zn(2+) for the ascorbate-mediated GPC1 deaminase degradation of its heparan sulfate side chains. This Sigmodon hispidus (Hispid cotton rat) protein is Major prion protein (PRNP).